Reading from the N-terminus, the 142-residue chain is Sec-independent protein translocase protein TatB (142 aa).

Residues 1 to 21 traverse the membrane as a helical segment; the sequence is MFDIGASELLVLVIVAIVVIG. Positions 75-142 are disordered; it reads RETAAQETAA…PAARPGSQQP (68 aa). Residues 76–94 are compositionally biased toward low complexity; that stretch reads ETAAQETAAAQGQTPAAAE. A compositionally biased stretch (basic and acidic residues) spans 123-133; sequence AKVEARVEEAP.

It belongs to the TatB family. The Tat system comprises two distinct complexes: a TatABC complex, containing multiple copies of TatA, TatB and TatC subunits, and a separate TatA complex, containing only TatA subunits. Substrates initially bind to the TatABC complex, which probably triggers association of the separate TatA complex to form the active translocon.

Its subcellular location is the cell inner membrane. Its function is as follows. Part of the twin-arginine translocation (Tat) system that transports large folded proteins containing a characteristic twin-arginine motif in their signal peptide across membranes. Together with TatC, TatB is part of a receptor directly interacting with Tat signal peptides. TatB may form an oligomeric binding site that transiently accommodates folded Tat precursor proteins before their translocation. This is Sec-independent protein translocase protein TatB from Novosphingobium aromaticivorans (strain ATCC 700278 / DSM 12444 / CCUG 56034 / CIP 105152 / NBRC 16084 / F199).